The following is a 162-amino-acid chain: 18.5 kDa class IV heat shock protein (162 aa).

The 97-residue stretch at 53-149 (TSSSTVNTQL…PPQLPEIEEN (97 aa)) folds into the sHSP domain.

The protein belongs to the small heat shock protein (HSP20) family. As to quaternary structure, may form oligomeric structures.

Its subcellular location is the cytoplasm. In Arabidopsis thaliana (Mouse-ear cress), this protein is 18.5 kDa class IV heat shock protein (HSP18.5).